The following is a 1192-amino-acid chain: MARHGDTRSPSPVGSTYSSSRRSRRDDDRYEKSRREDGRGHRRSRSPERRYRDRDRDRESYRRRDRSLDRRDDYRNDGGYRSNRRDRSRDRRRSRDRGDDRDHRRRSRDRDYRSRRDDSRDKARRRTDDSADLKHKSRRDDSRTRDLDSKSRDTSKPSTPAPAAQTEDEKRAERLAKLEAWKQKQAAEKERKQREAAAAGGARSILEEIDRKSGLSPAVGSPKSPVTPTTDATPAPYAGKFDPKAIKRNAAPTPSAPLVLGNDVAVPQIAKASATFSSMNNHAQANKPAAALSTAPSTLKSKRNVGGFGLGAKQVADAEKPSAVKTLGFGEEESTRKKLERLPTPPLEDGKDETVAADMGAEDEDDDMQDGETEEENAAAARAAAERREERLQNEALRAQSSEKVPQTNGDVEMNDAPIQAEAENMEVDVEEEDVDPLDAFMSELAESAPPKKTFGTKFSKAKEQQPEAMFGDENDVDLTAVGEGDADDFLAIANKAKKKKDIPTVNHEKVEYEPFRKKFYTEPSNLAQMTDEEAASLRLELDGIKVRGVDVPKPVQKWSQCGLGVQALDVIERLGYESPTSIQSQAIPAIMSGRDVIGVAKTGSGKTVAFLIPMFRHIKDQRPLDNMEGPIGLIMTPTRELATQIHKDCKPFLKALNLRAVCAYGGAPIKDQIADLKRGAEIVVCTPGRMIDLLAANAGRVTNLRRVTYVVLDEADRMFDMGFEPQVMKIMANIRPDRQTVLFSATFPRNMEALARKALTKPIEIIVGGRSVVAPEITQIVEVRNEDTKFVRLLEILGNLYSDDANEDARSLIFVERQEAADALLRELMRKGYPCMSIHGGKDQIDRDSTIEDFKAGIFPVLIATSVAARGLDVKQLKLVVNYDAPNHLEDYVHRAGRTGRAGNTGTAVTFLTEEQERYSVDIAKALKQSGQQVPEPVQKMVDSFLEKVKAGKEKASASGFGGKGLERLDQERDAARNRERRTYKTGEEGEDEEEKEDKAEKADERFNKALSSVQSAAAAAPTLPGVPKGIDLDGKITVHRTEKDPAGTSKNPLDKVGSAVADIHARLSRAGVMRSGVPIDNRGPDAGAYHATLEINDFPQKARWAVTNRTNVAKILEATGTSITTKGSFYPPGKVPGPNENAKLYILVEGETELAVTNAMRELMRLLKEGTIAAADSDARAPVGGRYNVV.

Disordered regions lie at residues 1-241 and 315-416; these read MARH…AGKF and VADA…EMND. Over residues 8–20 the composition is skewed to low complexity; that stretch reads RSPSPVGSTYSSS. 3 stretches are compositionally biased toward basic and acidic residues: residues 24–89, 96–155, and 167–195; these read RRDD…DRSR, DRGD…RDTS, and EDEK…KQRE. Low complexity predominate over residues 226 to 238; the sequence is VTPTTDATPAPYA. The segment covering 360 to 377 has biased composition (acidic residues); that stretch reads GAEDEDDDMQDGETEEEN. A compositionally biased stretch (basic and acidic residues) spans 384–393; sequence AAERREERLQ. Over residues 400–410 the composition is skewed to polar residues; that stretch reads QSSEKVPQTNG. Residues 557-585 carry the Q motif motif; that stretch reads QKWSQCGLGVQALDVIERLGYESPTSIQS. The Helicase ATP-binding domain occupies 588–766; the sequence is IPAIMSGRDV…RKALTKPIEI (179 aa). Position 601-608 (601-608) interacts with ATP; sequence AKTGSGKT. Residues 714–717 carry the DEAD box motif; the sequence is DEAD. A Helicase C-terminal domain is found at 793–943; the sequence is RLLEILGNLY…QVPEPVQKMV (151 aa). Residues 957–1003 are disordered; sequence ASASGFGGKGLERLDQERDAARNRERRTYKTGEEGEDEEEKEDKAEK. Residues 966–989 are compositionally biased toward basic and acidic residues; it reads GLERLDQERDAARNRERRTYKTGE.

Belongs to the DEAD box helicase family. DDX46/PRP5 subfamily.

Its subcellular location is the nucleus. The enzyme catalyses ATP + H2O = ADP + phosphate + H(+). Functionally, ATP-dependent RNA helicase involved spliceosome assembly and in nuclear splicing. Catalyzes an ATP-dependent conformational change of U2 snRNP. Bridges U1 and U2 snRNPs and enables stable U2 snRNP association with intron RNA. This Aspergillus clavatus (strain ATCC 1007 / CBS 513.65 / DSM 816 / NCTC 3887 / NRRL 1 / QM 1276 / 107) protein is Pre-mRNA-processing ATP-dependent RNA helicase prp5 (prp5).